The chain runs to 522 residues: Putative aminopeptidase W07G4.4 (522 aa).

Zn(2+) is bound by residues Lys271 and Asp276. The active site involves Lys283. Positions 294, 354, and 356 each coordinate Zn(2+). The active site involves Arg358.

It belongs to the peptidase M17 family. Requires Zn(2+) as cofactor.

This Caenorhabditis elegans protein is Putative aminopeptidase W07G4.4 (lap-2).